Consider the following 425-residue polypeptide: Glutamate-1-semialdehyde 2,1-aminomutase (425 aa).

Lys265 carries the N6-(pyridoxal phosphate)lysine modification.

This sequence belongs to the class-III pyridoxal-phosphate-dependent aminotransferase family. HemL subfamily. As to quaternary structure, homodimer. Requires pyridoxal 5'-phosphate as cofactor.

Its subcellular location is the cytoplasm. The catalysed reaction is (S)-4-amino-5-oxopentanoate = 5-aminolevulinate. It functions in the pathway porphyrin-containing compound metabolism; protoporphyrin-IX biosynthesis; 5-aminolevulinate from L-glutamyl-tRNA(Glu): step 2/2. The chain is Glutamate-1-semialdehyde 2,1-aminomutase from Thiobacillus denitrificans (strain ATCC 25259 / T1).